A 90-amino-acid polypeptide reads, in one-letter code: Probable Fe(2+)-trafficking protein (90 aa).

Belongs to the Fe(2+)-trafficking protein family.

Functionally, could be a mediator in iron transactions between iron acquisition and iron-requiring processes, such as synthesis and/or repair of Fe-S clusters in biosynthetic enzymes. The protein is Probable Fe(2+)-trafficking protein of Acidovorax ebreus (strain TPSY) (Diaphorobacter sp. (strain TPSY)).